We begin with the raw amino-acid sequence, 807 residues long: Dual specificity protein kinase YAK1 (807 aa).

The span at 1–19 shows a compositional bias: low complexity; the sequence is MNSSNNNDSSSSNSNMNNS. Residues 1-84 form a disordered region; it reads MNSSNNNDSS…QQQQQQQQNS (84 aa). A compositionally biased stretch (polar residues) spans 20 to 31; it reads LSPTLVTHSDAS. At serine 38 the chain carries Phosphoserine. A compositionally biased stretch (low complexity) spans 55–84; the sequence is NQGSQRSPQQQHQNHHQQQQQQQQQQQQNS. 3 positions are modified to phosphoserine: serine 115, serine 118, and serine 127. Residues 124–180 are disordered; that stretch reads RRKSSLVVPPARAPAPNPFQYDSYPAYTSSNTSLAGNSSGQYPSGYQQQQQQVYQQG. Residues 149–160 are compositionally biased toward polar residues; sequence AYTSSNTSLAGN. Low complexity predominate over residues 161-180; the sequence is SSGQYPSGYQQQQQQVYQQG. Serine 206 carries the phosphoserine modification. Residues 214-224 show a composition bias toward low complexity; sequence SNFSSLNSNTN. Residues 214–254 form a disordered region; it reads SNFSSLNSNTNQGTNSIPVMSPYRRLSAYPPSTSPPLQPPF. Residues serine 240, serine 245, and serine 247 each carry the phosphoserine modification. Threonine 288 is subject to Phosphothreonine. The residue at position 295 (serine 295) is a Phosphoserine. Positions 369 to 704 constitute a Protein kinase domain; that stretch reads YLVLDILGQG…PQQAMLHPFI (336 aa). ATP-binding positions include 375–383 and lysine 398; that span reads LGQGTFGQV. The Proton acceptor role is filled by aspartate 496. Tyrosine 530 carries the post-translational modification Phosphotyrosine. Residues 714–758 are disordered; sequence FPPGSSLPGPSEKHDDAKGQQSEYGSANDSSNNAGHNYVYNPSSA. The segment covering 732–758 has biased composition (polar residues); that stretch reads GQQSEYGSANDSSNNAGHNYVYNPSSA.

This sequence belongs to the protein kinase superfamily. CMGC Ser/Thr protein kinase family. MNB/DYRK subfamily. Post-translationally, phosphorylated; highly.

It is found in the cytoplasm. The protein localises to the nucleus. The catalysed reaction is L-seryl-[protein] + ATP = O-phospho-L-seryl-[protein] + ADP + H(+). It carries out the reaction L-threonyl-[protein] + ATP = O-phospho-L-threonyl-[protein] + ADP + H(+). It catalyses the reaction L-tyrosyl-[protein] + ATP = O-phospho-L-tyrosyl-[protein] + ADP + H(+). In terms of biological role, negative regulator of the cell cycle acting downstream of the cAMP-dependent protein kinase. Part of a glucose-sensing system involved in growth control in response to glucose availability. Phosphorylates POP2. The chain is Dual specificity protein kinase YAK1 (YAK1) from Saccharomyces cerevisiae (strain ATCC 204508 / S288c) (Baker's yeast).